Consider the following 232-residue polypeptide: 5'-methylthioadenosine/S-adenosylhomocysteine nucleosidase (232 aa).

The active-site Proton acceptor is the Glu12. Substrate is bound by residues Gly78, Val152, and Met173–Glu174. Asp197 serves as the catalytic Proton donor.

This sequence belongs to the PNP/UDP phosphorylase family. MtnN subfamily. In terms of assembly, homodimer.

The catalysed reaction is S-adenosyl-L-homocysteine + H2O = S-(5-deoxy-D-ribos-5-yl)-L-homocysteine + adenine. It catalyses the reaction S-methyl-5'-thioadenosine + H2O = 5-(methylsulfanyl)-D-ribose + adenine. The enzyme catalyses 5'-deoxyadenosine + H2O = 5-deoxy-D-ribose + adenine. It functions in the pathway amino-acid biosynthesis; L-methionine biosynthesis via salvage pathway; S-methyl-5-thio-alpha-D-ribose 1-phosphate from S-methyl-5'-thioadenosine (hydrolase route): step 1/2. Functionally, catalyzes the irreversible cleavage of the glycosidic bond in both 5'-methylthioadenosine (MTA) and S-adenosylhomocysteine (SAH/AdoHcy) to adenine and the corresponding thioribose, 5'-methylthioribose and S-ribosylhomocysteine, respectively. Also cleaves 5'-deoxyadenosine, a toxic by-product of radical S-adenosylmethionine (SAM) enzymes, into 5-deoxyribose and adenine. Thus, is required for in vivo function of the radical SAM enzymes biotin synthase and lipoic acid synthase, that are inhibited by 5'-deoxyadenosine accumulation. The protein is 5'-methylthioadenosine/S-adenosylhomocysteine nucleosidase of Buchnera aphidicola subsp. Acyrthosiphon pisum (strain 5A).